A 218-amino-acid chain; its full sequence is uncharacterized protein (218 aa).

It belongs to the glycosyltransferase 2 family.

This is an uncharacterized protein from Mycobacterium bovis (strain ATCC BAA-935 / AF2122/97).